The following is a 506-amino-acid chain: Hippocampus abundant transcript-like protein 1 (506 aa).

Residues 1–25 (MSVEPPPELEEKAASEPEAGAMPEK) are disordered. Over 1-49 (MSVEPPPELEEKAASEPEAGAMPEKRAGAQAAGSTWLQGFGRPSVYHAA) the chain is Extracellular. A helical transmembrane segment spans residues 50–70 (IVIFLEFFAWGLLTTPMLTVL). Over 71–82 (HETFSQHTFLMN) the chain is Cytoplasmic. Residues 83-103 (GLIQGVKGLLSFLSAPLIGAL) traverse the membrane as a helical segment. Residues 104–111 (SDVWGRKP) lie on the Extracellular side of the membrane. The chain crosses the membrane as a helical span at residues 112-132 (FLLGTVFFTCFPIPLMRISPW). Topologically, residues 133–134 (WY) are cytoplasmic. Residues 135 to 155 (FAMISVSGVFSVTFSVIFAYV) traverse the membrane as a helical segment. Residues 156 to 168 (ADVTQEHERSTAY) are Extracellular-facing. Residues 169–189 (GWVSATFAASLVSSPAIGAYL) traverse the membrane as a helical segment. Over 190–196 (SASYGDS) the chain is Cytoplasmic. A helical membrane pass occupies residues 197–217 (LVVLVATVVALLDICFILVAV). Over 218 to 255 (PESLPEKMRPVSWGAQISWKQADPFASLKKVGKDSTVL) the chain is Extracellular. The helical transmembrane segment at 256-276 (LICITVFLSYLPEAGQYSSFF) threads the bilayer. Residues 277–281 (LYLRQ) are Cytoplasmic-facing. Residues 282–302 (VIGFGSVKIAAFIAMVGILSI) traverse the membrane as a helical segment. The Extracellular segment spans residues 303–319 (VAQTAFLSILMRSLGNK). The chain crosses the membrane as a helical span at residues 320 to 340 (NTVLLGLGFQMLQLAWYGFGS). Q341 is a topological domain (cytoplasmic). Residues 342–362 (AWMMWAAGTVAAMSSITFPAI) traverse the membrane as a helical segment. Topologically, residues 363-387 (SALVSRNAESDQQGVAQGIITGIRG) are extracellular. A helical membrane pass occupies residues 388–408 (LCNGLGPALYGFIFYMFHVEL). Residues 409-428 (TELGPKLNSNNVPLQGAVIP) are Cytoplasmic-facing. Residues 429–449 (GPPFLFGACIVLMSFLVALFI) traverse the membrane as a helical segment. At 450-506 (PEYSKASGVQKHSNSSSGSLTNTPERGSDEDIEPLLQDSSIWELSSFEEPGNQCTEL) the chain is on the extracellular side. Positions 457-481 (GVQKHSNSSSGSLTNTPERGSDEDI) are disordered. Residues 459-474 (QKHSNSSSGSLTNTPE) show a composition bias toward polar residues. N-linked (GlcNAc...) asparagine glycosylation occurs at N463.

It belongs to the major facilitator superfamily.

The protein resides in the membrane. The polypeptide is Hippocampus abundant transcript-like protein 1 (Homo sapiens (Human)).